The sequence spans 109 residues: Large ribosomal subunit protein uL24 (109 aa).

This sequence belongs to the universal ribosomal protein uL24 family. Part of the 50S ribosomal subunit.

In terms of biological role, one of two assembly initiator proteins, it binds directly to the 5'-end of the 23S rRNA, where it nucleates assembly of the 50S subunit. One of the proteins that surrounds the polypeptide exit tunnel on the outside of the subunit. This Legionella pneumophila (strain Corby) protein is Large ribosomal subunit protein uL24.